A 482-amino-acid chain; its full sequence is Tripartite motif-containing protein 10 (482 aa).

An RING-type zinc finger spans residues 16-61 (CPICQGTLREPVTIDCGHNFCCVCLTRYLEIPCLDPGELPTCPLCK). Residues 95–136 (EEEDVCLEHREKVYYFCEDDEMQLCVVCREAWEHRHHTVRFL) form a B box-type zinc finger. The Zn(2+) site is built by cysteine 100, histidine 103, cysteine 122, and histidine 128. The B30.2/SPRY domain maps to 293 to 482 (REMKTFLEKL…GRGSKFSLSS (190 aa)).

The protein belongs to the TRIM/RBCC family. Interacts with IFNAR1; this interaction prevents association of IFNAR1 with TYK2.

The protein resides in the cytoplasm. In terms of biological role, E3 ligase that plays an essential role in the differentiation and survival of terminal erythroid cells. May directly bind to PTEN and promote its ubiquitination, resulting in its proteasomal degradation and activation of hypertrophic signaling. In addition, plays a role in immune response regulation by repressing the phosphorylation of STAT1 and STAT2 in the interferon/JAK/STAT signaling pathway independent of its E3 ligase activity. Mechanistically, interacts with the intracellular domain of IFNAR1 and thereby inhibits the association of TYK2 and IFNAR1. This Sus scrofa (Pig) protein is Tripartite motif-containing protein 10 (TRIM10).